Here is a 513-residue protein sequence, read N- to C-terminus: Protein phosphatase 1H (513 aa).

Ser7 is subject to Phosphoserine. The 430-residue stretch at 77-506 (ATGYAEVINA…DDISVYVIPL (430 aa)) folds into the PPM-type phosphatase domain. Residues 109-133 (TITSTPNRNSKRRSSLPNGEGLQLK) are disordered. At Thr113 the chain carries Phosphothreonine. 2 positions are modified to phosphoserine: Ser123 and Ser210. Arg212 is subject to Omega-N-methylarginine. At Ser220 the chain carries Phosphoserine. At Thr223 the chain carries Phosphothreonine. Ser421 is subject to Phosphoserine.

The protein belongs to the PP2C family.

The protein resides in the nucleus. It localises to the cytoplasm. It carries out the reaction O-phospho-L-seryl-[protein] + H2O = L-seryl-[protein] + phosphate. The enzyme catalyses O-phospho-L-threonyl-[protein] + H2O = L-threonyl-[protein] + phosphate. Its function is as follows. Dephosphorylates CDKN1B at 'Thr-187', thus removing a signal for proteasomal degradation. The polypeptide is Protein phosphatase 1H (Ppm1h) (Mus musculus (Mouse)).